The chain runs to 337 residues: MSEEKSVLRDLNLKNDDELMLRPQTLNQYIGQDDIKEMLSIYIQAALKREESLDHVLLYGAPGLGKTTLAQIIANELGVDIKITSGPAIEKTGDLVALLSSLSPGDVLFIDEIHRIPRFVEEVLYSAMEDYTLDIVLDKERDSRSIRIELPPFTLIGATTRFGDLSHPLRERFGAVFRLSYYKLEEIKQIVRRTSKVYQNEIDEKAVDELSKRSRGTPRIANRLFRRVRDFAEIMTDAVITLDITQLALTKLGIDHKGLDASDYLYLRGIVERFNGGPVGLESLASTIGEEPGTIEDVYEPYLLQEGYIKRTPRGRVATELAYNLLGVKYYKGLLDN.

The tract at residues 1 to 182 is large ATPase domain (RuvB-L); the sequence is MSEEKSVLRD…FGAVFRLSYY (182 aa). Residues Leu21, Arg22, Gly63, Lys66, Thr67, Thr68, 129–131, Arg172, Tyr182, and Arg219 each bind ATP; that span reads EDY. Thr67 is a binding site for Mg(2+). The segment at 183–253 is small ATPAse domain (RuvB-S); it reads KLEEIKQIVR…ITQLALTKLG (71 aa). The tract at residues 256–337 is head domain (RuvB-H); that stretch reads HKGLDASDYL…VKYYKGLLDN (82 aa). The DNA site is built by Arg311 and Arg316.

This sequence belongs to the RuvB family. Homohexamer. Forms an RuvA(8)-RuvB(12)-Holliday junction (HJ) complex. HJ DNA is sandwiched between 2 RuvA tetramers; dsDNA enters through RuvA and exits via RuvB. An RuvB hexamer assembles on each DNA strand where it exits the tetramer. Each RuvB hexamer is contacted by two RuvA subunits (via domain III) on 2 adjacent RuvB subunits; this complex drives branch migration. In the full resolvosome a probable DNA-RuvA(4)-RuvB(12)-RuvC(2) complex forms which resolves the HJ.

The protein localises to the cytoplasm. It catalyses the reaction ATP + H2O = ADP + phosphate + H(+). Its function is as follows. The RuvA-RuvB-RuvC complex processes Holliday junction (HJ) DNA during genetic recombination and DNA repair, while the RuvA-RuvB complex plays an important role in the rescue of blocked DNA replication forks via replication fork reversal (RFR). RuvA specifically binds to HJ cruciform DNA, conferring on it an open structure. The RuvB hexamer acts as an ATP-dependent pump, pulling dsDNA into and through the RuvAB complex. RuvB forms 2 homohexamers on either side of HJ DNA bound by 1 or 2 RuvA tetramers; 4 subunits per hexamer contact DNA at a time. Coordinated motions by a converter formed by DNA-disengaged RuvB subunits stimulates ATP hydrolysis and nucleotide exchange. Immobilization of the converter enables RuvB to convert the ATP-contained energy into a lever motion, pulling 2 nucleotides of DNA out of the RuvA tetramer per ATP hydrolyzed, thus driving DNA branch migration. The RuvB motors rotate together with the DNA substrate, which together with the progressing nucleotide cycle form the mechanistic basis for DNA recombination by continuous HJ branch migration. Branch migration allows RuvC to scan DNA until it finds its consensus sequence, where it cleaves and resolves cruciform DNA. This Acholeplasma laidlawii (strain PG-8A) protein is Holliday junction branch migration complex subunit RuvB.